The sequence spans 63 residues: DNA-directed RNA polymerase 7 kDa subunit (63 aa).

This sequence belongs to the poxviridae DNA-directed RNA polymerase 7 kDa subunit family. As to quaternary structure, the DNA-dependent RNA polymerase used for intermediate and late genes expression consists of eight subunits 147 kDa, 133 kDa, 35 kDa, 30 kDa, 22 kDa, 19 kDa, 18 kDa and 7 kDa totalling more than 500 kDa in mass. The same holoenzyme, with the addition of the transcription-specificity factor RAP94, is used for early gene expression.

Its subcellular location is the virion. It catalyses the reaction RNA(n) + a ribonucleoside 5'-triphosphate = RNA(n+1) + diphosphate. Part of the DNA-dependent RNA polymerase which catalyzes the transcription of viral DNA into RNA using the four ribonucleoside triphosphates as substrates. Responsible for the transcription of early, intermediate and late genes. DNA-dependent RNA polymerase associates with the early transcription factor (ETF) thereby allowing the early genes transcription. Late transcription, and probably also intermediate transcription, require newly synthesized RNA polymerase. In Homo sapiens (Human), this protein is DNA-directed RNA polymerase 7 kDa subunit (RPO7).